The sequence spans 39 residues: Photosystem II reaction center protein J (39 aa).

The chain crosses the membrane as a helical span at residues 9-29; that stretch reads LWLVATVGGIAVITVLGIFIY.

The protein belongs to the PsbJ family. As to quaternary structure, PSII is composed of 1 copy each of membrane proteins PsbA, PsbB, PsbC, PsbD, PsbE, PsbF, PsbH, PsbI, PsbJ, PsbK, PsbL, PsbM, PsbT, PsbX, PsbY, PsbZ, Psb30/Ycf12, at least 3 peripheral proteins of the oxygen-evolving complex and a large number of cofactors. It forms dimeric complexes.

It is found in the plastid. The protein localises to the chloroplast thylakoid membrane. One of the components of the core complex of photosystem II (PSII). PSII is a light-driven water:plastoquinone oxidoreductase that uses light energy to abstract electrons from H(2)O, generating O(2) and a proton gradient subsequently used for ATP formation. It consists of a core antenna complex that captures photons, and an electron transfer chain that converts photonic excitation into a charge separation. This is Photosystem II reaction center protein J from Gracilaria tenuistipitata var. liui (Red alga).